The sequence spans 213 residues: Putative 3-methyladenine DNA glycosylase (213 aa).

The protein belongs to the DNA glycosylase MPG family.

The protein is Putative 3-methyladenine DNA glycosylase of Leifsonia xyli subsp. xyli (strain CTCB07).